The primary structure comprises 510 residues: Bifunctional purine biosynthesis protein PurH (510 aa).

The region spanning 1–145 (MSKRALISVS…KNFEDVLVVT (145 aa)) is the MGS-like domain.

The protein belongs to the PurH family.

The catalysed reaction is (6R)-10-formyltetrahydrofolate + 5-amino-1-(5-phospho-beta-D-ribosyl)imidazole-4-carboxamide = 5-formamido-1-(5-phospho-D-ribosyl)imidazole-4-carboxamide + (6S)-5,6,7,8-tetrahydrofolate. The enzyme catalyses IMP + H2O = 5-formamido-1-(5-phospho-D-ribosyl)imidazole-4-carboxamide. It functions in the pathway purine metabolism; IMP biosynthesis via de novo pathway; 5-formamido-1-(5-phospho-D-ribosyl)imidazole-4-carboxamide from 5-amino-1-(5-phospho-D-ribosyl)imidazole-4-carboxamide (10-formyl THF route): step 1/1. The protein operates within purine metabolism; IMP biosynthesis via de novo pathway; IMP from 5-formamido-1-(5-phospho-D-ribosyl)imidazole-4-carboxamide: step 1/1. The chain is Bifunctional purine biosynthesis protein PurH from Oceanobacillus iheyensis (strain DSM 14371 / CIP 107618 / JCM 11309 / KCTC 3954 / HTE831).